A 271-amino-acid polypeptide reads, in one-letter code: ATP synthase subunit a (271 aa).

The next 5 membrane-spanning stretches (helical) occupy residues 47 to 67 (WENIIFAILVASLISLVAYLG), 107 to 127 (FLGTLFIYIFTMNIFGMVPLM), 133 to 153 (SLNITAALAICVFCLVQFLNI), 209 to 229 (ILIGTFALMGVVMISSVETFV), and 235 to 255 (LPFMFLGLLTSFMQALVFTLL).

Belongs to the ATPase A chain family. In terms of assembly, F-type ATPases have 2 components, CF(1) - the catalytic core - and CF(0) - the membrane proton channel. CF(1) has five subunits: alpha(3), beta(3), gamma(1), delta(1), epsilon(1). CF(0) has three main subunits: a(1), b(2) and c(9-12). The alpha and beta chains form an alternating ring which encloses part of the gamma chain. CF(1) is attached to CF(0) by a central stalk formed by the gamma and epsilon chains, while a peripheral stalk is formed by the delta and b chains.

The protein resides in the cell inner membrane. Functionally, key component of the proton channel; it plays a direct role in the translocation of protons across the membrane. The chain is ATP synthase subunit a from Protochlamydia amoebophila (strain UWE25).